Here is a 569-residue protein sequence, read N- to C-terminus: Urease subunit beta (569 aa).

The Urease domain maps to 131 to 569 (GGIDTHIHFI…VSLAQLFSIF (439 aa)). Residues H136, H138, and K219 each coordinate Ni(2+). Residue K219 is modified to N6-carboxylysine. H221 is a binding site for substrate. Residues H248 and H274 each contribute to the Ni(2+) site. The active-site Proton donor is the H322. D362 is a Ni(2+) binding site.

Belongs to the metallo-dependent hydrolases superfamily. Urease alpha subunit family. As to quaternary structure, heterohexamer of 3 UreA (alpha) and 3 UreB (beta) subunits. It depends on Ni cation as a cofactor. In terms of processing, carboxylation allows a single lysine to coordinate two nickel ions.

The protein localises to the cytoplasm. It catalyses the reaction urea + 2 H2O + H(+) = hydrogencarbonate + 2 NH4(+). Its pathway is nitrogen metabolism; urea degradation; CO(2) and NH(3) from urea (urease route): step 1/1. The polypeptide is Urease subunit beta (Helicobacter pylori (strain P12)).